Reading from the N-terminus, the 680-residue chain is DNA ligase (680 aa).

Residues 32-36 (DAVYD), 81-82 (SL), and E115 each bind NAD(+). K117 functions as the N6-AMP-lysine intermediate in the catalytic mechanism. Positions 138, 175, 291, and 315 each coordinate NAD(+). Zn(2+) is bound by residues C409, C412, C427, and C432. The BRCT domain maps to 600 to 680 (ASEQHLKGLT…RLQAMLKDSP (81 aa)).

It belongs to the NAD-dependent DNA ligase family. LigA subfamily. It depends on Mg(2+) as a cofactor. Mn(2+) is required as a cofactor.

It carries out the reaction NAD(+) + (deoxyribonucleotide)n-3'-hydroxyl + 5'-phospho-(deoxyribonucleotide)m = (deoxyribonucleotide)n+m + AMP + beta-nicotinamide D-nucleotide.. In terms of biological role, DNA ligase that catalyzes the formation of phosphodiester linkages between 5'-phosphoryl and 3'-hydroxyl groups in double-stranded DNA using NAD as a coenzyme and as the energy source for the reaction. It is essential for DNA replication and repair of damaged DNA. The polypeptide is DNA ligase (Synechococcus sp. (strain CC9902)).